The sequence spans 473 residues: Hyaluronidase-2 (473 aa).

The signal sequence occupies residues 1-20 (MWTGLGPAVTLALVLVVAWA). 2 disulfides stabilise this stretch: C47–C343 and C214–C230. N-linked (GlcNAc...) asparagine glycosylation is found at N77 and N106. E138 serves as the catalytic Proton donor. Residues N340 and N360 are each glycosylated (N-linked (GlcNAc...) asparagine). The 79-residue stretch at 364–442 (AAQYCSWAQC…YLGWGGEQCQ (79 aa)) folds into the EGF-like domain. 3 disulfides stabilise this stretch: C368–C379, C373–C430, and C432–C441. Residue G451 is the site of GPI-anchor amidated glycine attachment. The propeptide at 452 to 473 (ASGAWAGSHLTGLLAVAVLAFT) is removed in mature form.

Belongs to the glycosyl hydrolase 56 family. In terms of assembly, interacts with MST1R.

The protein resides in the cell membrane. The enzyme catalyses Random hydrolysis of (1-&gt;4)-linkages between N-acetyl-beta-D-glucosamine and D-glucuronate residues in hyaluronate.. In terms of biological role, catalyzes hyaluronan degradation into small fragments that are endocytosed and degraded in lysosomes by HYAL1 and exoglycosidases. Essential for the breakdown of extracellular matrix hyaluronan. The polypeptide is Hyaluronidase-2 (HYAL2) (Bos taurus (Bovine)).